Reading from the N-terminus, the 518-residue chain is Stage V sporulation protein B (518 aa).

14 helical membrane passes run 6 to 26, 45 to 65, 91 to 111, 120 to 140, 165 to 185, 186 to 206, 250 to 270, 281 to 301, 326 to 346, 348 to 368, 387 to 407, 411 to 431, 446 to 466, and 478 to 498; these read FLKG…LGFV, MAAP…PVAI, ITGV…PVMA, TLYP…SSVL, ISLV…YAAA, GAML…FVCF, WFFE…ATVA, FAMT…TALV, LCLL…DELM, VMYG…FFLL, AAMM…FVLA, SLGI…VTLL, IKEY…SSAI, and VNLA…LLVF.

This sequence belongs to the polysaccharide synthase family.

It localises to the cell membrane. In terms of biological role, involved, directly or indirectly, in spore cortex biosynthesis. Affects only indirectly the expression of late sporulation genes. The chain is Stage V sporulation protein B (spoVB) from Bacillus subtilis (strain 168).